The primary structure comprises 186 residues: UPF0200 protein Hbut_0338 (186 aa).

13 to 20 serves as a coordination point for ATP; it reads GMPGSGKS.

The protein belongs to the UPF0200 family.

The protein is UPF0200 protein Hbut_0338 of Hyperthermus butylicus (strain DSM 5456 / JCM 9403 / PLM1-5).